Reading from the N-terminus, the 127-residue chain is Fluoride-specific ion channel FluC (127 aa).

4 helical membrane passes run 4-24, 35-55, 71-91, and 103-123; these read LLLA…LLSM, LGTL…FAWF, TGFC…VFLL, and VFVN…LFSA. Na(+) is bound by residues glycine 75 and threonine 78.

The protein belongs to the fluoride channel Fluc/FEX (TC 1.A.43) family.

It localises to the cell inner membrane. It carries out the reaction fluoride(in) = fluoride(out). Na(+) is not transported, but it plays an essential structural role and its presence is essential for fluoride channel function. Functionally, fluoride-specific ion channel. Important for reducing fluoride concentration in the cell, thus reducing its toxicity. This Escherichia coli O7:K1 (strain IAI39 / ExPEC) protein is Fluoride-specific ion channel FluC.